The following is a 450-amino-acid chain: Chromosomal replication initiator protein DnaA (450 aa).

A domain I, interacts with DnaA modulators region spans residues 1–73; sequence MNTKELWIEV…KNILKKLTGI (73 aa). Positions 73 to 104 are domain II; sequence IQYNISFELEKNINKQASVISKIDTLTENNNL. The segment at 105–326 is domain III, AAA+ region; sequence AYYENYTFEN…GAIKRLLFLA (222 aa). Positions 149, 151, 152, and 153 each coordinate ATP. The tract at residues 327–450 is domain IV, binds dsDNA; that stretch reads VMNKKPNEII…NAIRRKIEGR (124 aa).

The protein belongs to the DnaA family. As to quaternary structure, oligomerizes as a right-handed, spiral filament on DNA at oriC.

The protein localises to the cytoplasm. Its function is as follows. Plays an essential role in the initiation and regulation of chromosomal replication. ATP-DnaA binds to the origin of replication (oriC) to initiate formation of the DNA replication initiation complex once per cell cycle. Binds the DnaA box (a 9 base pair repeat at the origin) and separates the double-stranded (ds)DNA. Forms a right-handed helical filament on oriC DNA; dsDNA binds to the exterior of the filament while single-stranded (ss)DNA is stabiized in the filament's interior. The ATP-DnaA-oriC complex binds and stabilizes one strand of the AT-rich DNA unwinding element (DUE), permitting loading of DNA polymerase. After initiation quickly degrades to an ADP-DnaA complex that is not apt for DNA replication. Binds acidic phospholipids. This Spiroplasma citri protein is Chromosomal replication initiator protein DnaA.